The chain runs to 242 residues: Probable pectate lyase D (242 aa).

The first 17 residues, Met1–Ala17, serve as a signal peptide directing secretion. Residue Asn216 is glycosylated (N-linked (GlcNAc...) asparagine). Positions Asp217–Cys242 are disordered.

It belongs to the polysaccharide lyase 3 family. It depends on Ca(2+) as a cofactor.

The protein localises to the secreted. The catalysed reaction is Eliminative cleavage of (1-&gt;4)-alpha-D-galacturonan to give oligosaccharides with 4-deoxy-alpha-D-galact-4-enuronosyl groups at their non-reducing ends.. Pectinolytic enzyme consist of four classes of enzymes: pectin lyase, polygalacturonase, pectin methylesterase and rhamnogalacturonase. Among pectinolytic enzymes, pectin lyase is the most important in depolymerization of pectin, since it cleaves internal glycosidic bonds of highly methylated pectins. Favors pectate, the anion, over pectin, the methyl ester. The polypeptide is Probable pectate lyase D (plyD) (Aspergillus fumigatus (strain CBS 144.89 / FGSC A1163 / CEA10) (Neosartorya fumigata)).